Here is a 675-residue protein sequence, read N- to C-terminus: MSQVAKKLLVTCALPYANGPIHLGHMLEHIQADIWVRFQRMRGKEVHFICADDAHGTPIMLKAQQMGIAPEEMIATVNQEHHQDFTGFSVSYDNYHSTHSEENQTLSTKIYLELKKNGHIKNRTISQLYDPEKNMFLPDRFVKGSCPKCKAEDQYGDNCEVCGSTYSPTELINPRSAVSGATPEMRETEHFFFDLPAFSDMLQAWTRSGALQEQVANKMQEWFESGLQQWDITRDAPYFGFEIPDAPGKYFYVWLDAPIGYMGSFQNLCDKRGNLNFDEFWAKDSTADLYHFIGKDIVYFHSLFWPAMLEGSGYRKPTNVFVHGYVTVNGAKMSKSRGTFIKASTYLDHLDADCLRYYYAAKLSARIDDIDLNLEDFVQRVNSDIVNKVVNLASRNAGFINKRFNGKLADKLADPALYQQFIDGAKVIAEEFNNREFSKAIREIMALADLANRYVDEQAPWVVAKEEGRDADLQAICSMGINLFRVLMTFLKPVLPSLAERAEAFLNTELTWHGIEQPLLDHQVSAFKALFNRIDMDKVDAMVVASKESINTPQKVSGPLAEDPIQDTITFDDFAKVDMRVALIKQADFVEGSDKLLKLMLDLGGETRQVFSGIRSSYPDPKALEGRLTIMVANLAPRKMRFGISEGMVMAAGPGGKDIFLLSPDSGAQPGMQVK.

The 'HIGH' region signature appears at Pro-15–His-25. Zn(2+) contacts are provided by Cys-146, Cys-149, Cys-159, and Cys-162. Residues Lys-332–Ser-336 carry the 'KMSKS' region motif. Residue Lys-335 coordinates ATP. Residues Asp-573–Lys-675 form the tRNA-binding domain.

Belongs to the class-I aminoacyl-tRNA synthetase family. MetG type 1 subfamily. As to quaternary structure, homodimer. Zn(2+) serves as cofactor.

Its subcellular location is the cytoplasm. The catalysed reaction is tRNA(Met) + L-methionine + ATP = L-methionyl-tRNA(Met) + AMP + diphosphate. In terms of biological role, is required not only for elongation of protein synthesis but also for the initiation of all mRNA translation through initiator tRNA(fMet) aminoacylation. This Photorhabdus laumondii subsp. laumondii (strain DSM 15139 / CIP 105565 / TT01) (Photorhabdus luminescens subsp. laumondii) protein is Methionine--tRNA ligase.